The chain runs to 419 residues: Acyl transferase 9 (419 aa).

Active-site proton acceptor residues include histidine 161 and aspartate 362.

It belongs to the plant acyltransferase family.

In terms of biological role, involved in the incorporation of ferulate into the cell wall. May act as arabinoxylan feruloyl transferase. This chain is Acyl transferase 9, found in Oryza sativa subsp. japonica (Rice).